The following is a 469-amino-acid chain: Adenosylhomocysteinase (469 aa).

Substrate contacts are provided by Thr63, Asp139, and Glu164. 165–167 is a binding site for NAD(+); sequence TTT. Substrate is bound by residues Lys194 and Asp198. NAD(+)-binding positions include Asn199, 228 to 233, Glu251, Asn300, 321 to 323, and Asn375; these read GYGDVG and IGH.

Belongs to the adenosylhomocysteinase family. The cofactor is NAD(+).

The protein localises to the cytoplasm. It carries out the reaction S-adenosyl-L-homocysteine + H2O = L-homocysteine + adenosine. Its pathway is amino-acid biosynthesis; L-homocysteine biosynthesis; L-homocysteine from S-adenosyl-L-homocysteine: step 1/1. Functionally, may play a key role in the regulation of the intracellular concentration of adenosylhomocysteine. The sequence is that of Adenosylhomocysteinase from Pseudomonas putida (strain ATCC 700007 / DSM 6899 / JCM 31910 / BCRC 17059 / LMG 24140 / F1).